The primary structure comprises 217 residues: GrpE protein homolog 1, mitochondrial (217 aa).

Residues 1–27 (MAARCVRLARRSLPALALSFRPSPRLL) constitute a mitochondrion transit peptide. Positions 37-56 (GQNLDEDLGHCEPKTDPPSA) are disordered. K94 bears the N6-acetyllysine; alternate mark. Residue K94 is modified to N6-succinyllysine; alternate. K100 bears the N6-acetyllysine mark. K120 carries the N6-succinyllysine modification. K215 carries the N6-acetyllysine; alternate modification. Position 215 is an N6-succinyllysine; alternate (K215).

This sequence belongs to the GrpE family. As to quaternary structure, probable component of the PAM complex at least composed of a mitochondrial HSP70 protein, GRPEL1 or GRPEL2, TIMM44, TIMM16/PAM16 and TIMM14/DNAJC19. Binds to HSP70, HSC70 and HSJ1B.

Its subcellular location is the mitochondrion matrix. Essential component of the PAM complex, a complex required for the translocation of transit peptide-containing proteins from the inner membrane into the mitochondrial matrix in an ATP-dependent manner. Seems to control the nucleotide-dependent binding of mitochondrial HSP70 to substrate proteins. This Mus musculus (Mouse) protein is GrpE protein homolog 1, mitochondrial (Grpel1).